Here is a 612-residue protein sequence, read N- to C-terminus: Glycosyltransferase 25 family member (612 aa).

The first 20 residues, Met1–Gly20, serve as a signal peptide directing secretion. 4 N-linked (GlcNAc...) asparagine glycosylation sites follow: Asn106, Asn227, Asn263, and Asn524. The short motif at His609–Leu612 is the Prevents secretion from ER element.

It belongs to the glycosyltransferase 25 family.

It localises to the endoplasmic reticulum lumen. In Drosophila melanogaster (Fruit fly), this protein is Glycosyltransferase 25 family member.